Reading from the N-terminus, the 554-residue chain is Glucose-6-phosphate isomerase 2 (554 aa).

Glu-359 (proton donor) is an active-site residue. Active-site residues include His-390 and Lys-518.

This sequence belongs to the GPI family.

Its subcellular location is the cytoplasm. It carries out the reaction alpha-D-glucose 6-phosphate = beta-D-fructose 6-phosphate. The protein operates within carbohydrate biosynthesis; gluconeogenesis. Its pathway is carbohydrate degradation; glycolysis; D-glyceraldehyde 3-phosphate and glycerone phosphate from D-glucose: step 2/4. Functionally, catalyzes the reversible isomerization of glucose-6-phosphate to fructose-6-phosphate. In Pseudomonas putida (strain ATCC 47054 / DSM 6125 / CFBP 8728 / NCIMB 11950 / KT2440), this protein is Glucose-6-phosphate isomerase 2.